The primary structure comprises 207 residues: Large ribosomal subunit protein uL4 (207 aa).

The disordered stretch occupies residues 53 to 85 (ERSDVARTGKKFGRQKGGGTARHGDRKAPIFIG).

It belongs to the universal ribosomal protein uL4 family. As to quaternary structure, part of the 50S ribosomal subunit.

One of the primary rRNA binding proteins, this protein initially binds near the 5'-end of the 23S rRNA. It is important during the early stages of 50S assembly. It makes multiple contacts with different domains of the 23S rRNA in the assembled 50S subunit and ribosome. Functionally, forms part of the polypeptide exit tunnel. The chain is Large ribosomal subunit protein uL4 from Novosphingobium aromaticivorans (strain ATCC 700278 / DSM 12444 / CCUG 56034 / CIP 105152 / NBRC 16084 / F199).